The chain runs to 84 residues: U4-theraphotoxin-Hhn1n (84 aa).

Residues 1–22 (MKVTLIAILTCAAVLVLHTTAA) form the signal peptide. The propeptide occupies 23–47 (EELEESQLMEVGMPDTELAAVDEER). 3 cysteine pairs are disulfide-bonded: cysteine 51–cysteine 65, cysteine 55–cysteine 76, and cysteine 70–cysteine 81.

It belongs to the neurotoxin 12 (Hwtx-2) family. 02 (Hwtx-2) subfamily. In terms of tissue distribution, expressed by the venom gland.

It is found in the secreted. In terms of biological role, postsynaptic neurotoxin. The protein is U4-theraphotoxin-Hhn1n of Cyriopagopus hainanus (Chinese bird spider).